The primary structure comprises 251 residues: LexA repressor (251 aa).

Residues 26–46 (FDEMKDALGLKSKSGIHRLIK) constitute a DNA-binding region (H-T-H motif). Catalysis depends on for autocatalytic cleavage activity residues Ser172 and Lys210.

The protein belongs to the peptidase S24 family. As to quaternary structure, homodimer.

The enzyme catalyses Hydrolysis of Ala-|-Gly bond in repressor LexA.. Represses a number of genes involved in the response to DNA damage (SOS response), including recA and lexA. In the presence of single-stranded DNA, RecA interacts with LexA causing an autocatalytic cleavage which disrupts the DNA-binding part of LexA, leading to derepression of the SOS regulon and eventually DNA repair. This Rhodospirillum rubrum (strain ATCC 11170 / ATH 1.1.1 / DSM 467 / LMG 4362 / NCIMB 8255 / S1) protein is LexA repressor.